A 154-amino-acid polypeptide reads, in one-letter code: Large ribosomal subunit protein uL30 (154 aa).

Residues 122–141 (RGGHDGIKTPASDGGQLGKH) form a disordered region.

Belongs to the universal ribosomal protein uL30 family. In terms of assembly, part of the 50S ribosomal subunit.

The protein is Large ribosomal subunit protein uL30 of Halobacterium salinarum (strain ATCC 29341 / DSM 671 / R1).